A 366-amino-acid polypeptide reads, in one-letter code: Class I histocompatibility antigen, Gogo-C*0201 alpha chain (366 aa).

The N-terminal stretch at 1 to 24 (MRVMAPRTLILPLSGALALTETWA) is a signal peptide. Positions 25-114 (GSHSMRYFYT…LRGYYNQSED (90 aa)) are alpha-1. At 25-308 (GSHSMRYFYT…EPSSQPTIPI (284 aa)) the chain is on the extracellular side. Asn-110 carries an N-linked (GlcNAc...) asparagine glycan. Residues 115–206 (GSHTLQSMYG…ENGKETLQRA (92 aa)) are alpha-2. 2 cysteine pairs are disulfide-bonded: Cys-125–Cys-188 and Cys-227–Cys-283. Residues 207–298 (EPPKTHVTHH…GLPEPLTLRW (92 aa)) form an alpha-3 region. Residues 209–297 (PKTHVTHHPL…EGLPEPLTLR (89 aa)) enclose the Ig-like C1-type domain. The connecting peptide stretch occupies residues 299–308 (EPSSQPTIPI). The chain crosses the membrane as a helical span at residues 309–333 (VGIVVGLAVLVVLAVLGAVVTAMMC). Topologically, residues 334–366 (RRKSSGGKGGSCSQAACSNSAQGSDESLITCKA) are cytoplasmic.

This sequence belongs to the MHC class I family. In terms of assembly, heterodimer of an alpha chain and a beta chain (beta-2-microglobulin).

The protein localises to the membrane. Involved in the presentation of foreign antigens to the immune system. The protein is Class I histocompatibility antigen, Gogo-C*0201 alpha chain of Gorilla gorilla gorilla (Western lowland gorilla).